The sequence spans 263 residues: Phosphatidylglycerol--prolipoprotein diacylglyceryl transferase (263 aa).

The next 4 membrane-spanning stretches (helical) occupy residues 15–35, 52–72, 83–103, and 112–132; these read ISIH…VYLA, FILL…VIFQ, IFAI…GAAV, and AIAV…AQSI. Arg134 contributes to the a 1,2-diacyl-sn-glycero-3-phospho-(1'-sn-glycerol) binding site. Transmembrane regions (helical) follow at residues 170 to 190, 200 to 220, and 227 to 247; these read VPTF…ILGL, GDVT…IEGM, and FVGL…GAVL.

The protein belongs to the Lgt family.

The protein resides in the cell membrane. The enzyme catalyses L-cysteinyl-[prolipoprotein] + a 1,2-diacyl-sn-glycero-3-phospho-(1'-sn-glycerol) = an S-1,2-diacyl-sn-glyceryl-L-cysteinyl-[prolipoprotein] + sn-glycerol 1-phosphate + H(+). It participates in protein modification; lipoprotein biosynthesis (diacylglyceryl transfer). In terms of biological role, catalyzes the transfer of the diacylglyceryl group from phosphatidylglycerol to the sulfhydryl group of the N-terminal cysteine of a prolipoprotein, the first step in the formation of mature lipoproteins. The chain is Phosphatidylglycerol--prolipoprotein diacylglyceryl transferase from Streptococcus thermophilus (strain ATCC BAA-491 / LMD-9).